The sequence spans 772 residues: Transcription factor sdnS (772 aa).

The segment at residues 23–53 (CWECRRRKIRCQFGAGNDTVCLPCQARGSTC) is a DNA-binding region (zn(2)-C6 fungal-type). 2 disordered regions span residues 94-121 (EAGG…SAQN) and 156-180 (ASML…NSKT). Residues 100–121 (ANRSTTQSNRGSRSPSPDSAQN) are compositionally biased toward polar residues.

Its subcellular location is the nucleus. It participates in antibiotic biosynthesis. Functionally, transcription factor; part of the gene cluster that mediates the biosynthesis of sordarin and hypoxysordarin, glycoside antibiotics with a unique tetracyclic diterpene aglycone structure. First, the geranylgeranyl diphosphate synthase sdnC constructs GGDP from farnesyl diphosphate and isopentenyl diphosphate. The diterpene cyclase sdnA then catalyzes the cyclization of GGDP to afford cycloaraneosene. Cycloaraneosene is then hydroxylated four times by the putative cytochrome P450 monooxygenases sdnB, sdnE, sdnF and sdnH to give a hydroxylated cycloaraneosene derivative such as cycloaraneosene-8,9,13,19-tetraol. Although the order of the hydroxylations is unclear, at least C8, C9 and C13 of the cycloaraneosene skeleton are hydroxylated before the sordaricin formation. Dehydration of the 13-hydroxy group of the hydroxylated cycloaraneosene derivative might be catalyzed by an unassigned hypothetical protein such as sdnG and sdnP to construct the cyclopentadiene moiety. The FAD-dependent oxidoreductase sdnN is proposed to catalyze the oxidation at C9 of the hydroxylated cycloaraneosene derivative and also catalyze the Baeyer-Villiger oxidation to give the lactone intermediate. The presumed lactone intermediate would be hydrolyzed to give an acrolein moiety and a carboxylate moiety. Then, [4+2]cycloaddition would occur between the acrolein moiety and the cyclopentadiene moiety to give sordaricin. SdnN might also be involved in the [4+2]cycloaddition after the hypothesized oxidation to accommodate the oxidized product and prompt the [4+2]cycloaddition. GDP-6-deoxy-D-altrose may be biosynthesized from GDP-D-mannose by the putative GDP-mannose-4,6-dehydratase sdnI and the short-chain dehydrogenase sdnK. The glycosyltransferase sdnJ catalyzes the attachment of 6-deoxy-D-altrose onto the 19-hydroxy group of sordaricin to give 4'-O-demethylsordarin. The methyltransferase sdnD would complete the biosynthesis of sordarin. Sordarin can be further modified into hypoxysordarin. The unique acyl chain at the 3'-hydroxy group of hypoxysordarin would be constructed by an iterative type I PKS sdnO and the trans-acting polyketide methyltransferase sdnL. SdnL would be responsible for the introduction of an alpha-methyl group of the polyketide chain. Alternatively, the beta-lactamase-like protein sdnR might be responsible for the cleavage and transfer of the polyketide chain from the PKS sdnO to sordarin. Two putative cytochrome P450 monooxygenases, sdnQ and sdnT, might catalyze the epoxidations of the polyketide chain to complete the biosynthesis of hypoxysordarin. Transcriptional regulators sdnM and sdnS are presumably encoded for the transcriptional regulation of the expression of the sdn gene cluster. This is Transcription factor sdnS from Sordaria araneosa (Pleurage araneosa).